A 181-amino-acid polypeptide reads, in one-letter code: GMP synthase [glutamine-hydrolyzing] subunit A (181 aa).

A Glutamine amidotransferase type-1 domain is found at 2 to 181 (KILVVNNYGQ…FDNFLEICRR (180 aa)). C72 functions as the Nucleophile in the catalytic mechanism. Residues H159 and E161 contribute to the active site.

Heterodimer composed of a glutamine amidotransferase subunit (A) and a GMP-binding subunit (B).

The catalysed reaction is XMP + L-glutamine + ATP + H2O = GMP + L-glutamate + AMP + diphosphate + 2 H(+). Its pathway is purine metabolism; GMP biosynthesis; GMP from XMP (L-Gln route): step 1/1. Its function is as follows. Catalyzes the synthesis of GMP from XMP. The polypeptide is GMP synthase [glutamine-hydrolyzing] subunit A (Methanothrix thermoacetophila (strain DSM 6194 / JCM 14653 / NBRC 101360 / PT) (Methanosaeta thermophila)).